A 1040-amino-acid polypeptide reads, in one-letter code: Multidrug resistance protein MdtB (1040 aa).

The next 12 membrane-spanning stretches (helical) occupy residues 16 to 36 (FIMR…AGII), 347 to 367 (LMMA…NIPA), 369 to 389 (IIPG…MVFL), 396 to 416 (LTLM…IVVI), 440 to 460 (IGFT…PLLF), 472 to 492 (FAIT…TLTP), 537 to 557 (WLTL…WVFI), 863 to 883 (LGST…VLGI), 888 to 908 (FIHP…ALLA), 911 to 931 (IAGS…IGIV), 968 to 988 (ILMT…STGV), and 998 to 1018 (IGMV…TPVI).

This sequence belongs to the resistance-nodulation-cell division (RND) (TC 2.A.6) family. MdtB subfamily. Part of a tripartite efflux system composed of MdtA, MdtB and MdtC. MdtB forms a heteromultimer with MdtC.

The protein localises to the cell inner membrane. Functionally, the MdtABC tripartite complex confers resistance against novobiocin and deoxycholate. The chain is Multidrug resistance protein MdtB from Escherichia coli O45:K1 (strain S88 / ExPEC).